Here is a 399-residue protein sequence, read N- to C-terminus: S-adenosylmethionine synthase (399 aa).

ATP is bound at residue His-19. Asp-21 lines the Mg(2+) pocket. Position 47 (Glu-47) interacts with K(+). Residues Glu-60 and Gln-103 each coordinate L-methionine. The flexible loop stretch occupies residues 103–113 (QSPDIAQGVNQ). ATP-binding positions include 179-181 (DGK), 246-247 (RF), Asp-255, 261-262 (RK), Ala-278, and Lys-282. Asp-255 provides a ligand contact to L-methionine. Residue Lys-286 participates in L-methionine binding.

It belongs to the AdoMet synthase family. As to quaternary structure, homotetramer; dimer of dimers. The cofactor is Mg(2+). K(+) serves as cofactor.

Its subcellular location is the cytoplasm. It carries out the reaction L-methionine + ATP + H2O = S-adenosyl-L-methionine + phosphate + diphosphate. It functions in the pathway amino-acid biosynthesis; S-adenosyl-L-methionine biosynthesis; S-adenosyl-L-methionine from L-methionine: step 1/1. In terms of biological role, catalyzes the formation of S-adenosylmethionine (AdoMet) from methionine and ATP. The overall synthetic reaction is composed of two sequential steps, AdoMet formation and the subsequent tripolyphosphate hydrolysis which occurs prior to release of AdoMet from the enzyme. This Halalkalibacterium halodurans (strain ATCC BAA-125 / DSM 18197 / FERM 7344 / JCM 9153 / C-125) (Bacillus halodurans) protein is S-adenosylmethionine synthase.